Here is a 2210-residue protein sequence, read N- to C-terminus: Filamin-A (2210 aa).

2 Calponin-homology (CH) domains span residues 15-120 and 139-242; these read KIQQ…LHYS and HTPK…NSKL. 20 Filamin repeats span residues 249-347, 349-447, 448-544, 545-635, 638-734, 735-831, 832-929, 930-1022, 1023-1121, 1122-1217, 1218-1312, 1322-1423, 1424-1515, 1516-1603, 1606-1698, 1699-1796, 1799-1891, 1893-1986, 1988-2079, and 2116-2210; these read RPKT…PVKV, GHAG…PVKV, APLS…EVKV, GPKK…IAQI, RTDF…RVYV, GVPV…VVVE, QTVD…VVNV, KSGC…RVLV, EETV…VMTV, FPKS…KLEA, FPTG…SIKA, SEYI…KFHV, DSIT…FAKI, TGEG…KVTV, REVG…TVKV, AGEG…QFTV, LRDS…KVYV, PDAG…RIKV, KDVA…KVNA, and TFKS…QIDV.

The protein belongs to the filamin family. In terms of assembly, interacts with Ten-m. Germline-specific in females (at protein level). Expressed in ovary.

The protein localises to the cytoplasm. It localises to the cytoskeleton. The protein resides in the cell membrane. Involved in the germline ring canal formation. May tether actin microfilament within the ovarian ring canal to the cell membrane. Contributes to actin microfilaments organization. The sequence is that of Filamin-A (cher) from Drosophila melanogaster (Fruit fly).